We begin with the raw amino-acid sequence, 229 residues long: ATP synthase subunit a (229 aa).

A run of 6 helical transmembrane segments spans residues 25–45 (ADAIAYTWLIIALLLIVSILA), 82–102 (FFPLIATLALFILVSNLIGLI), 111–131 (NINTTAACAVIVFVTTHIVGI), 142–162 (FLGPILWLAPMMFFIEVIGHF), 181–201 (LVLMIFFGLAPFLVPLPMMLM), and 202–222 (GVLVSFIQAFVFMLLAMIYIQ).

Belongs to the ATPase A chain family. As to quaternary structure, F-type ATPases have 2 components, CF(1) - the catalytic core - and CF(0) - the membrane proton channel. CF(1) has five subunits: alpha(3), beta(3), gamma(1), delta(1), epsilon(1). CF(0) has three main subunits: a(1), b(2) and c(9-12). The alpha and beta chains form an alternating ring which encloses part of the gamma chain. CF(1) is attached to CF(0) by a central stalk formed by the gamma and epsilon chains, while a peripheral stalk is formed by the delta and b chains.

The protein localises to the cell inner membrane. Key component of the proton channel; it plays a direct role in the translocation of protons across the membrane. The protein is ATP synthase subunit a of Geotalea daltonii (strain DSM 22248 / JCM 15807 / FRC-32) (Geobacter daltonii).